We begin with the raw amino-acid sequence, 314 residues long: Cathepsin L 1 (314 aa).

The first 24 residues, 1-24 (MMLLGASLYLNNTQEVSDEIDTAN), serve as a signal peptide directing secretion. The propeptide at 25-109 (LYANWKMKYN…NAANSNFQYK (85 aa)) is activation peptide. 3 disulfides stabilise this stretch: Cys132/Cys175, Cys166/Cys207, and Cys259/Cys302. The active site involves Cys135. Active-site residues include His265 and Asn282.

It belongs to the peptidase C1 family.

The protein localises to the secreted. The catalysed reaction is Specificity close to that of papain. As compared to cathepsin B, cathepsin L exhibits higher activity toward protein substrates, but has little activity on Z-Arg-Arg-NHMec, and no peptidyl-dipeptidase activity.. Functionally, may be involved in extracellular digestion. The protein is Cathepsin L 1 of Paramecium tetraurelia.